The following is a 251-amino-acid chain: Hydroxyacylglutathione hydrolase GloB (251 aa).

Positions 53, 55, 57, 58, 110, and 127 each coordinate Zn(2+). Residues Arg136–Phe138, His165–Tyr167, and Arg245–Lys248 contribute to the substrate site. His165 contributes to the Zn(2+) binding site.

It belongs to the metallo-beta-lactamase superfamily. Glyoxalase II family. In terms of assembly, monomer. It depends on Zn(2+) as a cofactor.

It catalyses the reaction an S-(2-hydroxyacyl)glutathione + H2O = a 2-hydroxy carboxylate + glutathione + H(+). The catalysed reaction is (R)-S-lactoylglutathione + H2O = (R)-lactate + glutathione + H(+). The protein operates within secondary metabolite metabolism; methylglyoxal degradation; (R)-lactate from methylglyoxal: step 2/2. With respect to regulation, is inhibited by Cu(2+). In terms of biological role, type II glyoxalase that catalyzes the hydrolysis of (R)-S-lactoylglutathione to (R)-lactate and glutathione. Is more efficient than the isozyme GloC, and plays a major contribution to methylglyoxal (MG) detoxification in E.coli. The two isoenzymes have additive effects and ensure maximal MG degradation. In Escherichia coli (strain K12), this protein is Hydroxyacylglutathione hydrolase GloB.